The primary structure comprises 393 residues: L-rhamnonate dehydratase (393 aa).

2 residues coordinate substrate: His-22 and Arg-48. The Mg(2+) site is built by Asp-214, Glu-241, and Glu-269. The active-site Proton acceptor is the His-319. Position 339 (Glu-339) interacts with substrate.

It belongs to the mandelate racemase/muconate lactonizing enzyme family. RhamD subfamily. Homooctamer; tetramer of dimers. Requires Mg(2+) as cofactor.

The enzyme catalyses L-rhamnonate = 2-dehydro-3-deoxy-L-rhamnonate + H2O. In terms of biological role, catalyzes the dehydration of L-rhamnonate to 2-keto-3-deoxy-L-rhamnonate (KDR). This Azorhizobium caulinodans (strain ATCC 43989 / DSM 5975 / JCM 20966 / LMG 6465 / NBRC 14845 / NCIMB 13405 / ORS 571) protein is L-rhamnonate dehydratase.